The primary structure comprises 834 residues: Probable glucan 1,3-beta-glucosidase D (834 aa).

Residues 1-33 (MPSHSRSRDRYGGRDSDREARYDYDYARRRYAT) are compositionally biased toward basic and acidic residues. 2 disordered regions span residues 1–188 (MPSH…ASHL) and 200–251 (QYEK…TKAR). Residues 1-306 (MPSHSRSRDR…GGRPFWKRKK (306 aa)) are Cytoplasmic-facing. Positions 34-45 (DDNDDDYDDDEL) are enriched in acidic residues. Basic and acidic residues-rich tracts occupy residues 46 to 76 (EHGL…RDAE), 98 to 173 (YGHD…ETAA), 201 to 218 (YEKE…AAKA), and 228 to 245 (VVGE…ESHR). Residues 307–327 (WIGLGALILILVIVIPVAVVV) form a helical; Signal-anchor for type II membrane protein membrane-spanning segment. The Extracellular segment spans residues 328-834 (SKKHDNKSDP…PDFGNLPEYY (507 aa)). A disordered region spans residues 331–354 (HDNKSDPADPQGTSPGKSNLDGLS). N-linked (GlcNAc...) asparagine glycosylation is found at Asn333, Asn379, Asn384, Asn396, Asn549, Asn561, and Asn570. Glu600 serves as the catalytic Proton donor. N-linked (GlcNAc...) asparagine glycosylation is found at Asn639, Asn672, and Asn692. The active-site Nucleophile is Glu705.

It belongs to the glycosyl hydrolase 5 (cellulase A) family.

It is found in the cell membrane. It carries out the reaction Successive hydrolysis of beta-D-glucose units from the non-reducing ends of (1-&gt;3)-beta-D-glucans, releasing alpha-glucose.. Glucosidase involved in the degradation of cellulosic biomass. Active on lichenan. The chain is Probable glucan 1,3-beta-glucosidase D (exgD) from Neosartorya fischeri (strain ATCC 1020 / DSM 3700 / CBS 544.65 / FGSC A1164 / JCM 1740 / NRRL 181 / WB 181) (Aspergillus fischerianus).